The following is a 906-amino-acid chain: Ectonucleotide pyrophosphatase/phosphodiesterase family member 1 (906 aa).

Positions 1 to 25 are disordered; sequence MERDGEQAGQGPRHGPAGNGRELES. Residues 1 to 58 lie on the Cytoplasmic side of the membrane; that stretch reads MERDGEQAGQGPRHGPAGNGRELESPAAASLLAPMDLGEEPLEKAERARTAKDPNTYK. S25 carries the phosphoserine modification. Residues 27 to 34 carry the Di-leucine motif motif; it reads AAASLLAP. The helical; Signal-anchor for type II membrane protein transmembrane segment at 59–79 threads the bilayer; that stretch reads VLSLVLSVCVLTTILGCIFGL. The Extracellular portion of the chain corresponds to 80 to 906; sequence KPSCAKEVKS…THLPIFSQED (827 aa). SMB domains are found at residues 86–126 and 127–170; these read EVKS…VEPT and HIWT…QEKK. Disulfide bonds link C90/C104, C94/C122, C102/C115, C108/C114, C131/C148, C136/C166, C146/C159, C152/C158, C177/C223, and C185/C397. N161 is a glycosylation site (N-linked (GlcNAc...) asparagine). Positions 173–573 are phosphodiesterase; the sequence is VEEACETIDA…APNNESHGSL (401 aa). 3 residues coordinate AMP: D200, T238, and N259. Residues D200 and T238 each contribute to the Zn(2+) site. Residue T238 is the AMP-threonine intermediate of the active site. Residues T238 and N259 each coordinate CMP. T238 and N259 together coordinate dTMP. GMP contacts are provided by T238 and N259. T238 is modified (phosphothreonine). N267 is a glycosylation site (N-linked (GlcNAc...) asparagine). GMP is bound by residues L272, K277, and Y322. AMP is bound by residues K277 and Y322. Residues K277 and Y322 each coordinate CMP. Position 322 (Y322) interacts with dTMP. A glycan (N-linked (GlcNAc...) asparagine) is linked at N323. D358 provides a ligand contact to AMP. Residues D358, H362, D405, and H406 each coordinate Zn(2+). D358 is a CMP binding site. D358 contacts dTMP. Residue D358 coordinates GMP. H362 serves as a coordination point for 2',3'-cGAMP. H406 provides a ligand contact to AMP. H406 is a CMP binding site. Residue H406 participates in dTMP binding. A GMP-binding site is contributed by H406. Intrachain disulfides connect C413–C512, C462–C849, C596–C653, C607–C707, C609–C692, and C819–C829. N-linked (GlcNAc...) asparagine glycosylation occurs at N459. 2',3'-cGAMP is bound at residue S514. H517 contacts AMP. H517 serves as a coordination point for Zn(2+). Position 517 (H517) interacts with CMP. Residue H517 coordinates dTMP. Position 517 (H517) interacts with GMP. N-linked (GlcNAc...) asparagine glycosylation is found at N567 and N624. The linker stretch occupies residues 579 to 628; sequence KPIYTPSHPKEESFLSQCPIKSVSSDLGCTCDPSIVPIMDFEKQFNLTTD. The tract at residues 635-906 is nuclease-like domain; the sequence is SMTVPNGRPR…THLPIFSQED (272 aa). Positions 781, 783, 785, 787, and 789 each coordinate Ca(2+).

This sequence belongs to the nucleotide pyrophosphatase/phosphodiesterase family. In terms of assembly, ectonucleotide pyrophosphatase/phosphodiesterase family member 1: Homodimer. Ectonucleotide pyrophosphatase/phosphodiesterase family member 1: Interacts with INSR; leading to inhibit INSR autophosphorylation and subsequent activation of INSR kinase activity. Ectonucleotide pyrophosphatase/phosphodiesterase family member 1, secreted form: Monomeric. The cofactor is Zn(2+). In terms of processing, the secreted form is produced through cleavage at Lys-85 by intracellular processing.

The protein resides in the cell membrane. Its subcellular location is the basolateral cell membrane. It localises to the secreted. The enzyme catalyses Hydrolytically removes 5'-nucleotides successively from the 3'-hydroxy termini of 3'-hydroxy-terminated oligonucleotides.. It catalyses the reaction a ribonucleoside 5'-triphosphate + H2O = a ribonucleoside 5'-phosphate + diphosphate + H(+). It carries out the reaction ATP + H2O = AMP + diphosphate + H(+). The catalysed reaction is UTP + H2O = UMP + diphosphate + H(+). The enzyme catalyses GTP + H2O = GMP + diphosphate + H(+). It catalyses the reaction CTP + H2O = CMP + diphosphate + H(+). It carries out the reaction 2',3'-cGAMP + 2 H2O = GMP + AMP + 2 H(+). The catalysed reaction is P(1),P(4)-bis(5'-adenosyl) tetraphosphate + H2O = AMP + ATP + 2 H(+). The enzyme catalyses 3',5'-cyclic AMP + H2O = AMP + H(+). With respect to regulation, at low concentrations of ATP, a phosphorylated intermediate is formed which inhibits further hydrolysis. Nucleotide pyrophosphatase that generates diphosphate (PPi) and functions in bone mineralization and soft tissue calcification by regulating pyrophosphate levels. PPi inhibits bone mineralization and soft tissue calcification by binding to nascent hydroxyapatite crystals, thereby preventing further growth of these crystals. Preferentially hydrolyzes ATP, but can also hydrolyze other nucleoside 5' triphosphates such as GTP, CTP and UTP to their corresponding monophosphates with release of pyrophosphate, as well as diadenosine polyphosphates, and also 3',5'-cAMP to AMP. May also be involved in the regulation of the availability of nucleotide sugars in the endoplasmic reticulum and Golgi, and the regulation of purinergic signaling. Inhibits ectopic joint calcification and maintains articular chondrocytes by repressing hedgehog signaling; it is however unclear whether hedgehog inhibition is direct or indirect. Appears to modulate insulin sensitivity. Also involved in melanogenesis. Also able to hydrolyze 2',3'-cGAMP (cyclic GMP-AMP), a second messenger that activates TMEM173/STING and triggers type-I interferon production. 2',3'-cGAMP degradation takes place in the lumen or extracellular space, and not in the cytosol where it is produced; the role of 2',3'-cGAMP hydrolysis is therefore unclear. Not able to hydrolyze the 2',3'-cGAMP linkage isomer 3'-3'-cGAMP. The polypeptide is Ectonucleotide pyrophosphatase/phosphodiesterase family member 1 (Rattus norvegicus (Rat)).